The sequence spans 688 residues: Coiled-coil domain-containing protein 157 (688 aa).

The segment covering Ala-143–Pro-153 has biased composition (polar residues). Disordered stretches follow at residues Ala-143–Ser-162, Ala-168–Ser-189, Gln-322–Arg-341, Gln-366–Ala-385, and Gln-592–Thr-688. Positions Lys-288–Gln-572 form a coiled coil. The segment covering Glu-369–Gln-382 has biased composition (polar residues). Positions Ser-671–Ala-680 are enriched in low complexity.

This Bos taurus (Bovine) protein is Coiled-coil domain-containing protein 157 (CCDC157).